The primary structure comprises 56 residues: Large ribosomal subunit protein bL32c (56 aa).

This sequence belongs to the bacterial ribosomal protein bL32 family.

The protein resides in the plastid. The protein localises to the chloroplast. This is Large ribosomal subunit protein bL32c from Tupiella akineta (Green alga).